Here is an 87-residue protein sequence, read N- to C-terminus: Small ribosomal subunit protein uS17 (87 aa).

This sequence belongs to the universal ribosomal protein uS17 family. As to quaternary structure, part of the 30S ribosomal subunit.

In terms of biological role, one of the primary rRNA binding proteins, it binds specifically to the 5'-end of 16S ribosomal RNA. The chain is Small ribosomal subunit protein uS17 from Bacillus subtilis (strain 168).